The primary structure comprises 533 residues: Probable RNA-binding protein 46 (533 aa).

RRM domains are found at residues C61–D139, C141–P223, and K236–P308. Residues E338–P362 are disordered.

Interacts with YTHDC2, MEIOC, MOV10, CNOT6L, DDX4, UPF1 and PABPC1. In terms of tissue distribution, expressed in the testis and ovary (at protein level). Expressed in spermatogonia and spermatocytes in testis (at protein level).

Its subcellular location is the cytoplasm. Essential for male and female fertility, playing a crucial role in regulating germ cell development by ensuring the proper progression of meiosis prophase I. Regulates mitotic-to-meiotic transition in spermatogenesis by forming a complex with MEIOC and YTHDC2 which recognizes and down-regulates mitotic transcripts for a successful meiotic entry. Required for normal synaptonemal complex formation during meiosis, binding meiotic cohesin subunit mRNAs containing GCCUAU/GUUCGA motifs in their 3'UTRs regions and positively regulating their translation. Required for spermatogonial differentiation in both developing and adult testis. The sequence is that of Probable RNA-binding protein 46 from Mus musculus (Mouse).